Here is a 306-residue protein sequence, read N- to C-terminus: Methylated RNA-binding protein 1 (306 aa).

The YTH domain occupies 155–290 (SRFFVIKSSS…SIGISIINLF (136 aa)). Residues 161–163 (KSS), N207, and W231 contribute to the RNA site.

Its function is as follows. RNA-binding protein that acts as a post-transcriptional regulator of phosphate metabolism by binding to the 3'-UTR region of PHO4 mRNA, decreasing its stability. Acts by recognizing and binding N6-methyladenosine (m6A)-containing RNAs, a modification present at internal sites of mRNAs and some non-coding RNAs. In Saccharomyces cerevisiae (strain ATCC 204508 / S288c) (Baker's yeast), this protein is Methylated RNA-binding protein 1.